A 370-amino-acid polypeptide reads, in one-letter code: Chaperone protein DnaJ (370 aa).

The J domain maps to 4-68; sequence DYYQVLGVSK…QKRAAYDRFG (65 aa). A CR-type zinc finger spans residues 133–211; the sequence is GIEKNISFSS…CHGMGRYHKQ (79 aa). 8 residues coordinate Zn(2+): C146, C149, C163, C166, C185, C188, C199, and C202. CXXCXGXG motif repeat units follow at residues 146–153, 163–170, 185–192, and 199–206; these read CDACHGTG, CDSCGGVG, CHKCQGNG, and CKKCHGMG.

This sequence belongs to the DnaJ family. In terms of assembly, homodimer. It depends on Zn(2+) as a cofactor.

The protein localises to the cytoplasm. Functionally, participates actively in the response to hyperosmotic and heat shock by preventing the aggregation of stress-denatured proteins and by disaggregating proteins, also in an autonomous, DnaK-independent fashion. Unfolded proteins bind initially to DnaJ; upon interaction with the DnaJ-bound protein, DnaK hydrolyzes its bound ATP, resulting in the formation of a stable complex. GrpE releases ADP from DnaK; ATP binding to DnaK triggers the release of the substrate protein, thus completing the reaction cycle. Several rounds of ATP-dependent interactions between DnaJ, DnaK and GrpE are required for fully efficient folding. Also involved, together with DnaK and GrpE, in the DNA replication of plasmids through activation of initiation proteins. The chain is Chaperone protein DnaJ from Rickettsia typhi (strain ATCC VR-144 / Wilmington).